A 236-amino-acid polypeptide reads, in one-letter code: 2,3,4,5-tetrahydropyridine-2,6-dicarboxylate N-acetyltransferase (236 aa).

It belongs to the transferase hexapeptide repeat family. DapH subfamily.

The catalysed reaction is (S)-2,3,4,5-tetrahydrodipicolinate + acetyl-CoA + H2O = L-2-acetamido-6-oxoheptanedioate + CoA. Its pathway is amino-acid biosynthesis; L-lysine biosynthesis via DAP pathway; LL-2,6-diaminopimelate from (S)-tetrahydrodipicolinate (acetylase route): step 1/3. In terms of biological role, catalyzes the transfer of an acetyl group from acetyl-CoA to tetrahydrodipicolinate. The sequence is that of 2,3,4,5-tetrahydropyridine-2,6-dicarboxylate N-acetyltransferase from Clostridium botulinum (strain Alaska E43 / Type E3).